We begin with the raw amino-acid sequence, 253 residues long: Transcriptional regulatory protein TcrA (253 aa).

The Response regulatory domain occupies 24–138 (RILVVEDEPK…ELFARLRALS (115 aa)). At Asp73 the chain carries 4-aspartylphosphate. Positions 146-244 (PPTLEAGDLR…IRGAGYRLRK (99 aa)) form a DNA-binding region, ompR/PhoB-type.

As to quaternary structure, interacts with HK2. Post-translationally, phosphorylated by HK2.

Its subcellular location is the cytoplasm. Functionally, member of the three-protein two-component system HK1/HK2/TcrA. This is Transcriptional regulatory protein TcrA (tcrA) from Mycobacterium tuberculosis (strain ATCC 25618 / H37Rv).